A 363-amino-acid chain; its full sequence is D-alanine--D-alanine ligase (363 aa).

The ATP-grasp domain occupies 148–353 (KKLLAAEGLP…YGTLVSTLIE (206 aa)). 176-231 (RERLGLPVFVKPARAGSSIGITKVDDWAALDTAIAAAREHDPKVIVEAGIVGREVE) is a binding site for ATP. Mg(2+) contacts are provided by Asp308, Glu320, and Asn322.

This sequence belongs to the D-alanine--D-alanine ligase family. It depends on Mg(2+) as a cofactor. Mn(2+) serves as cofactor.

Its subcellular location is the cytoplasm. The catalysed reaction is 2 D-alanine + ATP = D-alanyl-D-alanine + ADP + phosphate + H(+). It participates in cell wall biogenesis; peptidoglycan biosynthesis. Its function is as follows. Cell wall formation. The sequence is that of D-alanine--D-alanine ligase from Nocardia farcinica (strain IFM 10152).